A 227-amino-acid polypeptide reads, in one-letter code: H-2 class II histocompatibility antigen, A-U alpha chain (227 aa).

Residues 1–82 (DHVGSYGIVV…KRSNSTPATN (82 aa)) are alpha-1. The Extracellular portion of the chain corresponds to 1-189 (DHVGSYGIVV…IPAPMSELTE (189 aa)). The alpha-2 stretch occupies residues 83–176 (EAPQATVFPK…GLEEPVLKHW (94 aa)). One can recognise an Ig-like C1-type domain in the interval 85–177 (PQATVFPKSP…LEEPVLKHWE (93 aa)). Cysteine 105 and cysteine 161 are oxidised to a cystine. N-linked (GlcNAc...) asparagine glycosylation occurs at asparagine 116. The tract at residues 177-189 (EPEIPAPMSELTE) is connecting peptide. The chain crosses the membrane as a helical span at residues 190 to 215 (TVVCALGLSVGLVGIVVGTIFIIQGL). The Cytoplasmic portion of the chain corresponds to 216 to 227 (RSGGTSRHPGPL).

Belongs to the MHC class II family.

Its subcellular location is the membrane. This is H-2 class II histocompatibility antigen, A-U alpha chain (H2-Aa) from Mus musculus (Mouse).